The chain runs to 714 residues: Glutamine-dependent NAD(+) synthetase (714 aa).

One can recognise a CN hydrolase domain in the interval 5 to 275 (ITLATCNLNQ…VEVVTATVDL (271 aa)). Catalysis depends on glutamate 45, which acts as the Proton acceptor; for glutaminase activity. Lysine 114 acts as the For glutaminase activity in catalysis. Residue cysteine 175 is the Nucleophile; for glutaminase activity of the active site. The segment at 329–714 (YHSPEEEIAL…GSTLDIMSID (386 aa)) is ligase. 359-366 (PLSGGIDS) provides a ligand contact to ATP. Serine 361 is a catalytic residue.

In the C-terminal section; belongs to the NAD synthetase family.

It catalyses the reaction deamido-NAD(+) + L-glutamine + ATP + H2O = L-glutamate + AMP + diphosphate + NAD(+) + H(+). It functions in the pathway cofactor biosynthesis; NAD(+) biosynthesis; NAD(+) from deamido-NAD(+) (L-Gln route): step 1/1. The protein is Glutamine-dependent NAD(+) synthetase (QNS1) of Saccharomyces cerevisiae (strain ATCC 204508 / S288c) (Baker's yeast).